Here is a 509-residue protein sequence, read N- to C-terminus: DNA nucleotidylexotransferase (509 aa).

The tract at residues 1 to 24 is disordered; the sequence is MDPPRASHLSPRKKRPRQTGALMA. A Nuclear localization signal motif is present at residues 11–17; it reads PRKKRPR. The region spanning 27–124 is the BRCT domain; it reads PQDIKFQDLV…KPVEMTGKHQ (98 aa). The residue at position 134 (Ser134) is a Phosphoserine. A mediates interaction with DNTTIP2 region spans residues 151 to 509; it reads SQYACQRRTT…DYIEPWERNA (359 aa). Residues 258 to 262 are involved in DNA binding; sequence VGLKT. Residues 333-338 and 342-345 contribute to the a 2'-deoxyribonucleoside 5'-triphosphate site; these read GFRRGK and HDVD. Mg(2+)-binding residues include Asp343, Asp345, and Asp433. Position 448–449 (448–449) interacts with a 2'-deoxyribonucleoside 5'-triphosphate; that stretch reads GW.

It belongs to the DNA polymerase type-X family. As to quaternary structure, interacts with PRP19 and DNTTIP1. Forms a ternary complex with DNTTIP2 and core histone. Released from this complex by PCNA. Interacts with TRERF1. Mg(2+) is required as a cofactor.

It is found in the nucleus. The catalysed reaction is DNA(n) + a 2'-deoxyribonucleoside 5'-triphosphate = DNA(n+1) + diphosphate. In terms of biological role, template-independent DNA polymerase which catalyzes the random addition of deoxynucleoside 5'-triphosphate to the 3'-end of a DNA initiator. One of the in vivo functions of this enzyme is the addition of nucleotides at the junction (N region) of rearranged Ig heavy chain and T-cell receptor gene segments during the maturation of B- and T-cells. In Homo sapiens (Human), this protein is DNA nucleotidylexotransferase (DNTT).